Consider the following 528-residue polypeptide: Peptide chain release factor 3 (528 aa).

The tr-type G domain occupies 11-279 (NKRRTFAIIS…GIVEWAPKPL (269 aa)). Residues 20–27 (SHPDAGKT), 88–92 (DTPGH), and 142–145 (NKLD) contribute to the GTP site.

Belongs to the TRAFAC class translation factor GTPase superfamily. Classic translation factor GTPase family. PrfC subfamily.

The protein localises to the cytoplasm. Functionally, increases the formation of ribosomal termination complexes and stimulates activities of RF-1 and RF-2. It binds guanine nucleotides and has strong preference for UGA stop codons. It may interact directly with the ribosome. The stimulation of RF-1 and RF-2 is significantly reduced by GTP and GDP, but not by GMP. In Shewanella sp. (strain W3-18-1), this protein is Peptide chain release factor 3.